A 121-amino-acid polypeptide reads, in one-letter code: Small ribosomal subunit protein uS13 (121 aa).

The segment at 91–121 is disordered; the sequence is HRRGLPVRGQNSKNNARTRKGPRRTVANKKK. The span at 106-121 shows a compositional bias: basic residues; the sequence is ARTRKGPRRTVANKKK.

It belongs to the universal ribosomal protein uS13 family. As to quaternary structure, part of the 30S ribosomal subunit. Forms a loose heterodimer with protein S19. Forms two bridges to the 50S subunit in the 70S ribosome.

Located at the top of the head of the 30S subunit, it contacts several helices of the 16S rRNA. In the 70S ribosome it contacts the 23S rRNA (bridge B1a) and protein L5 of the 50S subunit (bridge B1b), connecting the 2 subunits; these bridges are implicated in subunit movement. Contacts the tRNAs in the A and P-sites. This Bacillus mycoides (strain KBAB4) (Bacillus weihenstephanensis) protein is Small ribosomal subunit protein uS13.